Reading from the N-terminus, the 359-residue chain is Protein FAM50 homolog (359 aa).

Disordered regions lie at residues Asn-122–Pro-150 and Pro-339–Lys-359. Residues Leu-123–Asp-136 show a composition bias toward acidic residues. Basic and acidic residues predominate over residues His-137–Pro-150.

Belongs to the FAM50 family.

This Drosophila melanogaster (Fruit fly) protein is Protein FAM50 homolog.